A 269-amino-acid polypeptide reads, in one-letter code: Formamidopyrimidine-DNA glycosylase (269 aa).

Catalysis depends on P2, which acts as the Schiff-base intermediate with DNA. The active-site Proton donor is E3. The active-site Proton donor; for beta-elimination activity is the K57. Residues H90, R109, and K150 each contribute to the DNA site. The segment at 235 to 269 (QVYGRKGEPCRVCGTPIVATKHAQRATFYCRQCQK) adopts an FPG-type zinc-finger fold. Catalysis depends on R259, which acts as the Proton donor; for delta-elimination activity.

The protein belongs to the FPG family. Monomer. It depends on Zn(2+) as a cofactor.

It carries out the reaction Hydrolysis of DNA containing ring-opened 7-methylguanine residues, releasing 2,6-diamino-4-hydroxy-5-(N-methyl)formamidopyrimidine.. The catalysed reaction is 2'-deoxyribonucleotide-(2'-deoxyribose 5'-phosphate)-2'-deoxyribonucleotide-DNA = a 3'-end 2'-deoxyribonucleotide-(2,3-dehydro-2,3-deoxyribose 5'-phosphate)-DNA + a 5'-end 5'-phospho-2'-deoxyribonucleoside-DNA + H(+). Its function is as follows. Involved in base excision repair of DNA damaged by oxidation or by mutagenic agents. Acts as a DNA glycosylase that recognizes and removes damaged bases. Has a preference for oxidized purines, such as 7,8-dihydro-8-oxoguanine (8-oxoG). Has AP (apurinic/apyrimidinic) lyase activity and introduces nicks in the DNA strand. Cleaves the DNA backbone by beta-delta elimination to generate a single-strand break at the site of the removed base with both 3'- and 5'-phosphates. The sequence is that of Formamidopyrimidine-DNA glycosylase from Escherichia coli O7:K1 (strain IAI39 / ExPEC).